The primary structure comprises 54 residues: Light-harvesting protein B-870 beta chain (54 aa).

The Cytoplasmic portion of the chain corresponds to 1 to 20 (EVKQESLSGITEGEAKEFHK). A bacteriochlorophyll contacts are provided by His-19 and His-37. The chain crosses the membrane as a helical span at residues 21–43 (IFTSSILVFFGVAAFAHLLVWIW). Residues 44 to 54 (RPWVPGPNGYS) are Periplasmic-facing.

This sequence belongs to the antenna complex beta subunit family. As to quaternary structure, the core complex is formed by different alpha and beta chains, binding bacteriochlorophyll molecules, and arranged most probably in tetrameric structures disposed around the reaction center. The non-pigmented gamma chains may constitute additional components.

It localises to the cell inner membrane. In terms of biological role, antenna complexes are light-harvesting systems, which transfer the excitation energy to the reaction centers. The polypeptide is Light-harvesting protein B-870 beta chain (Rhodospirillum rubrum).